The following is a 415-amino-acid chain: Serine hydroxymethyltransferase (415 aa).

(6S)-5,6,7,8-tetrahydrofolate contacts are provided by residues Leu-117 and 121–123 (GHL). The residue at position 226 (Lys-226) is an N6-(pyridoxal phosphate)lysine. (6S)-5,6,7,8-tetrahydrofolate is bound by residues Glu-241 and 349-351 (SPF).

This sequence belongs to the SHMT family. Homodimer. Pyridoxal 5'-phosphate is required as a cofactor.

It is found in the cytoplasm. It carries out the reaction (6R)-5,10-methylene-5,6,7,8-tetrahydrofolate + glycine + H2O = (6S)-5,6,7,8-tetrahydrofolate + L-serine. It functions in the pathway one-carbon metabolism; tetrahydrofolate interconversion. Its pathway is amino-acid biosynthesis; glycine biosynthesis; glycine from L-serine: step 1/1. Its function is as follows. Catalyzes the reversible interconversion of serine and glycine with tetrahydrofolate (THF) serving as the one-carbon carrier. This reaction serves as the major source of one-carbon groups required for the biosynthesis of purines, thymidylate, methionine, and other important biomolecules. Also exhibits THF-independent aldolase activity toward beta-hydroxyamino acids, producing glycine and aldehydes, via a retro-aldol mechanism. This Geotalea daltonii (strain DSM 22248 / JCM 15807 / FRC-32) (Geobacter daltonii) protein is Serine hydroxymethyltransferase.